A 154-amino-acid chain; its full sequence is Large ribosomal subunit protein uL23 (154 aa).

The protein belongs to the universal ribosomal protein uL23 family.

In terms of biological role, this protein binds to a specific region on the 26S rRNA. This is Large ribosomal subunit protein uL23 (RPL23A) from Fritillaria agrestis (Stinkbells).